The primary structure comprises 353 residues: MTEPLKPRIDFDGPLEVDQNPKFRAQQTFDENQAQNFAPATLDEAQEEEGQVEAVMDAALRPKRSLWRKMVMGGLALFGASVVGQGVQWTMNAWQTQDWVALGGCAAGALIIGAGVGSVVTEWRRLWRLRQRAHERDEARDLLHSHGTGKGRAFCEKLAQQAGIDQSHPALQRWYASIHETQNDREVVSLYAHLVQPVLDAQARREISRSAAESTLMIAVSPLALVDMAFIAWRNLRLINRIATLYGIELGYYSRLRLFKLVLLNIAFAGASELVREVGMDWMSQDLAARLSTRAAQGIGAGLLTARLGIKAMELCRPLPWIDDDKPRLGDFRRQLIGQVKETLQKGKTPSEK.

Helical transmembrane passes span 70–90 (MVMG…VQWT), 100–120 (VALG…GSVV), and 213–233 (ESTL…FIAW).

This sequence belongs to the UPF0283 family.

The protein resides in the cell inner membrane. The chain is UPF0283 membrane protein YcjF from Escherichia coli O45:K1 (strain S88 / ExPEC).